The chain runs to 442 residues: tRNA modification GTPase MnmE (442 aa).

(6S)-5-formyl-5,6,7,8-tetrahydrofolate is bound by residues arginine 27, glutamate 84, and lysine 124. The region spanning 221-366 is the TrmE-type G domain; the sequence is GLHVVIVGAP…LLDALQAFAE (146 aa). GTP-binding positions include 231 to 236, 250 to 256, and 275 to 278; these read NAGKSS, SEEAGTT, and DTAG. Residues serine 235 and threonine 256 each coordinate Mg(2+). Position 442 (lysine 442) interacts with (6S)-5-formyl-5,6,7,8-tetrahydrofolate.

Belongs to the TRAFAC class TrmE-Era-EngA-EngB-Septin-like GTPase superfamily. TrmE GTPase family. In terms of assembly, homodimer. Heterotetramer of two MnmE and two MnmG subunits. K(+) is required as a cofactor.

The protein resides in the cytoplasm. In terms of biological role, exhibits a very high intrinsic GTPase hydrolysis rate. Involved in the addition of a carboxymethylaminomethyl (cmnm) group at the wobble position (U34) of certain tRNAs, forming tRNA-cmnm(5)s(2)U34. This is tRNA modification GTPase MnmE from Brucella ovis (strain ATCC 25840 / 63/290 / NCTC 10512).